A 375-amino-acid polypeptide reads, in one-letter code: Platelet-derived growth factor receptor-like protein (375 aa).

A signal peptide spans 1 to 21 (MKVWLLLGLLLVHEALEDVTG). Residues 22-64 (QHLPKNKRPKEPGENRIKPTNKKVKPKIPKMKDRDSANSAPKT) form a disordered region. The segment covering 40–50 (PTNKKVKPKIP) has biased composition (basic residues). The region spanning 62-159 (PKTQSIMMQV…GYICRKDEAK (98 aa)) is the Ig-like C2-type 1 domain. A disulfide bridge links cysteine 96 with cysteine 143. 2 N-linked (GlcNAc...) asparagine glycosylation sites follow: asparagine 132 and asparagine 219. The region spanning 272–375 (PSTTILASSN…TTVATTVEFS (104 aa)) is the Ig-like C2-type 2 domain. A disulfide bridge connects residues cysteine 293 and cysteine 357.

As to quaternary structure, forms a complex composed of PDGFRL, TNK2 and GRB2. In terms of tissue distribution, expressed in colon, lung and liver.

It is found in the secreted. The polypeptide is Platelet-derived growth factor receptor-like protein (PDGFRL) (Homo sapiens (Human)).